Consider the following 80-residue polypeptide: Cell division protein ZapB (80 aa).

A coiled-coil region spans residues 3–80 (FEVLEQLESK…ALLGKMDEVE (78 aa)). Positions 41-53 (ANELRSQREELEQ) are enriched in basic and acidic residues. The interval 41-60 (ANELRSQREELEQKSQQAQQ) is disordered.

Belongs to the ZapB family. As to quaternary structure, homodimer. The ends of the coiled-coil dimer bind to each other, forming polymers. Interacts with FtsZ.

The protein localises to the cytoplasm. Its function is as follows. Non-essential, abundant cell division factor that is required for proper Z-ring formation. It is recruited early to the divisome by direct interaction with FtsZ, stimulating Z-ring assembly and thereby promoting cell division earlier in the cell cycle. Its recruitment to the Z-ring requires functional FtsA or ZipA. This chain is Cell division protein ZapB, found in Vibrio campbellii (strain ATCC BAA-1116).